The following is a 185-amino-acid chain: Elongation factor P (185 aa).

This sequence belongs to the elongation factor P family.

It localises to the cytoplasm. It participates in protein biosynthesis; polypeptide chain elongation. Involved in peptide bond synthesis. Stimulates efficient translation and peptide-bond synthesis on native or reconstituted 70S ribosomes in vitro. Probably functions indirectly by altering the affinity of the ribosome for aminoacyl-tRNA, thus increasing their reactivity as acceptors for peptidyl transferase. This Lachnoclostridium phytofermentans (strain ATCC 700394 / DSM 18823 / ISDg) (Clostridium phytofermentans) protein is Elongation factor P.